The chain runs to 205 residues: Spermatogenesis-associated protein 24 (205 aa).

Residues 17-166 (LALDQLRDVI…QQKQIFRNHM (150 aa)) are a coiled coil. The tract at residues 138-185 (EDILNGKENEIKELQQVISQQKQIFRNHMSDFRIQKQQESYMAQVLDQ) is required for interaction with CBX5 and TBPL1. A disordered region spans residues 180–205 (AQVLDQKHKKASGTRQARSHQHPREK). Over residues 186-205 (KHKKASGTRQARSHQHPREK) the composition is skewed to basic residues.

It belongs to the SPATA24 family. As to quaternary structure, homodimer. Interacts with CBX3, CBX5, GMNN, GTF2B, TBPL1 and the polycomb proteins PHCF2, RNF2 and SCMH1 but not with CBX1 or PCGF2.

The protein localises to the cytoplasm. The protein resides in the nucleus. It localises to the nucleolus. It is found in the nucleoplasm. In terms of biological role, binds DNA with high affinity but does not bind to TATA boxes. Synergises with GMNN and TBP in activation of TATA box-containing promoters and with GMNN and TBPL1 in activation of the NF1 TATA-less promoter. May play a role in cytoplasm movement and removal during spermiogenesis. The polypeptide is Spermatogenesis-associated protein 24 (SPATA24) (Homo sapiens (Human)).